We begin with the raw amino-acid sequence, 4998 residues long: SCO-spondin (4998 aa).

The N-terminal stretch at 1-17 is a signal peptide; sequence MLPLALLFGMLWTQANG. The 85-residue stretch at 18–102 folds into the EMI domain; it reads HWCEQIETVH…ACCPGWGGAH (85 aa). Residues 72–241 enclose the VWFD 1 domain; the sequence is GLCAIYKPPE…KLPGSEPGCL (170 aa). 2 disulfide bridges follow: C74/C202 and C103/C240. N-linked (GlcNAc...) asparagine glycosylation is found at N88 and N130. One can recognise a TIL 1 domain in the interval 349-404; the sequence is CPGGQLYSDCVSSCPPSCSAVAQGEEGSCGKECVSGCECPTGLFWDGALCVPAAHC. Residues 404–496 enclose the VWFC 1 domain; the sequence is CPCYHRRQRY…HGACDTGSCL (93 aa). The 174-residue stretch at 442–615 folds into the VWFD 2 domain; that stretch reads AECAVGGDGH…FQVSGDGRCP (174 aa). Cystine bridges form between C444-C577 and C468-C614. N-linked (GlcNAc...) asparagine glycosylation is found at N534 and N698. The TIL 2 domain maps to 706-759; it reads CPGGQVYQECAPVCGHHCGEPEDCKELGICVAGCNCPPGLLWDLEGQCVPPSMC. N-linked (GlcNAc...) asparagine glycosylation is found at N771, N790, N824, and N866. One can recognise a VWFD 3 domain in the interval 892 to 1062; that stretch reads GWCQASGAPH…HSWRLNPLCP (171 aa). Disulfide bonds link C894-C1026, C916-C1061, and C937-C944. Residues 1153 to 1209 form the TIL 3 domain; it reads CEGGQVYEPCGSTCPPTCHDHHSELRWHCQVITCVEGCFCPEGTLLHGGACMKLAAC. N-linked (GlcNAc...) asparagine glycosylation occurs at N1230. LDL-receptor class A domains follow at residues 1253 to 1290, 1293 to 1328, 1329 to 1365, and 1369 to 1407; these read GCAE…EGCA, VCGE…EQGC, LCPH…ESCL, and SCIS…SHCS. 12 disulfides stabilise this stretch: C1254–C1267, C1261–C1280, C1274–C1289, C1294–C1306, C1301–C1319, C1313–C1328, C1330–C1342, C1337–C1355, C1349–C1364, C1370–C1382, C1377–C1395, and C1389–C1406. Positions 1406-1440 are disordered; it reads CSLPSLPTPPGGIGQNPSTSSLDTAPSPVGSTSPA. The segment covering 1420-1440 has biased composition (polar residues); sequence QNPSTSSLDTAPSPVGSTSPA. LDL-receptor class A domains follow at residues 1442–1478 and 1480–1519; these read PCSL…LDCG and PCML…DVCE. Cystine bridges form between C1443-C1455, C1450-C1468, C1462-C1477, C1481-C1494, C1488-C1507, and C1501-C1518. N1528 carries an N-linked (GlcNAc...) asparagine glycan. The LDL-receptor class A 7 domain occupies 1533-1571; sequence PCPEFSCPDGTCIDFLLVCDGNPDCELADETEPSLDEQG. 9 disulfides stabilise this stretch: C1534–C1544, C1539–C1557, C1551–C1572, C1584–C1620, C1588–C1625, C1599–C1610, C1640–C1680, C1644–C1685, and C1654–C1664. TSP type-1 domains are found at residues 1572-1626 and 1628-1686; these read CGAW…EACP and DGEW…EGCL. N-linked (GlcNAc...) asparagine glycosylation is present at N1598. N1687 is a glycosylation site (N-linked (GlcNAc...) asparagine). The 55-residue stretch at 1692-1746 folds into the TIL 4 domain; sequence GELVFRTCAPCPLTCDDISGQAACPPDRPCSSPGCWCPDGKVLNTEGQCVRPRQC. EGF-like domains lie at 1702–1741 and 1742–1768; these read CPLT…GQCV and RPRQ…CQLC. One can recognise a TSP type-1 3 domain in the interval 1771 to 1827; sequence DCGWSSWSPWAECLGPCSSQSLQWSFRSPNNPRLSGHGRQCRGIHRKARRCQTEACE. 3 disulfides stabilise this stretch: C1772/C1811, C1783/C1787, and C1821/C1826. The VWFC 2 domain maps to 1827 to 1887; that stretch reads EGCEQWGLMY…GMGESCCHCA (61 aa). N1892 and N1989 each carry an N-linked (GlcNAc...) asparagine glycan. The F5/8 type C domain occupies 1929 to 2085; sequence CYSPLGLAGL…IFLWVELLGL (157 aa). Residues 2091 to 2127 form the LDL-receptor class A 8 domain; sequence LCPGSRHRCASGECAPKGGPCDGAVDCDDGSDEEGCG. 3 disulfide bridges follow: C2092–C2104, C2099–C2117, and C2111–C2126. Residues 2119–2209 are disordered; sequence DGSDEEGCGS…TFPPGAKSLH (91 aa). Over residues 2130–2144 the composition is skewed to polar residues; sequence HASTTSRTPALSPTQ. The span at 2148–2158 shows a compositional bias: basic and acidic residues; sequence FPREVSEDLRQ. Composition is skewed to polar residues over residues 2164 to 2173 and 2190 to 2201; these read TSHSPPSSGE and QPMQTLSATSTF. LDL-receptor class A domains lie at 2242–2278 and 2299–2335; these read PCGP…QHCA and LCSP…DNCV. 12 cysteine pairs are disulfide-bonded: C2243-C2255, C2250-C2268, C2262-C2277, C2300-C2312, C2307-C2325, C2319-C2334, C2337-C2373, C2348-C2352, C2383-C2388, C2403-C2440, C2407-C2445, and C2418-C2430. 2 consecutive TSP type-1 domains span residues 2336–2389 and 2391–2446; these read DCVL…QACP and AGAW…QLCP. In terms of domain architecture, TIL 5 spans 2468-2511; the sequence is VPPCPPSCLDPEANRSCSGHCMEGCRCPPGLLLQDSHCLPLSEC. N-linked (GlcNAc...) asparagine glycans are attached at residues N2481 and N2530. TSP type-1 domains follow at residues 2551–2605, 2609–2664, and 2666–2719; these read SCGW…TDCG, PGWT…PVCP, and PSAW…HPCT. Disulfide bonds link C2552/C2590, C2563/C2567, C2600/C2604, C2620/C2658, C2624/C2663, C2640/C2648, C2678/C2713, C2682/C2718, and C2693/C2703. N-linked (GlcNAc...) asparagine glycosylation is found at N2772 and N2802. TSP type-1 domains are found at residues 2820–2875 and 2876–2919; these read ACGW…RPCR and GPGA…QPCA. Disulfide bonds link C2821–C2859, C2832–C2836, and C2869–C2874. N-linked (GlcNAc...) asparagine glycosylation is found at N2897, N2952, N2999, and N3009. The region spanning 2926-2978 is the TIL 6 domain; the sequence is CPEDQQWLDCAQGPASCAHLSIPGEANQTCHPGCYCLSGMLLLNNVCVPVQDC. TSP type-1 domains lie at 3019 to 3086 and 3088 to 3143; these read QPAW…PGCN and AGGW…QPCP. 6 disulfides stabilise this stretch: C3031-C3080, C3035-C3085, C3046-C3070, C3100-C3137, C3104-C3142, and C3115-C3127. The N-linked (GlcNAc...) asparagine glycan is linked to N3146. Positions 3151 to 3201 constitute a TIL 7 domain; the sequence is EGAEYSPCGPPCPRSCDDLVHCVWRCQPGCYCPLGKVLSADGAICVKPSYC. N3235 is a glycosylation site (N-linked (GlcNAc...) asparagine). 2 TSP type-1 domains span residues 3244–3306 and 3308–3363; these read SGDW…TACP and DGAW…TLCT. 6 disulfide bridges follow: C3256–C3299, C3260–C3305, C3271–C3283, C3320–C3355, C3323–C3362, and C3333–C3345. A glycan (N-linked (GlcNAc...) asparagine) is linked at N3301. N-linked (GlcNAc...) asparagine glycosylation is present at N3357. The TIL 8 domain occupies 3365–3421; the sequence is CGGGQDLLPCGQPCPHSCQDLSLGSTCQPGSAGCQSGCGCPPGQLSQDGLCVFPVDC. N-linked (GlcNAc...) asparagine glycosylation is found at N3435 and N3462. A TSP type-1 15 domain is found at 3481–3529; it reads PGIWSSWGPWEKCSVSCGGGEQLRSRQCARPPCPGLAQQSRICHIHVCR. Intrachain disulfides connect C3493-C3523, C3497-C3528, and C3508-C3513. Residue N3638 is glycosylated (N-linked (GlcNAc...) asparagine). TSP type-1 domains lie at 3657–3713, 3727–3779, 3793–3849, and 3851–3906; these read HGSF…PECP, AGGW…PSCA, NCFW…RACP, and PGGW…MPCE. 3 cysteine pairs are disulfide-bonded: C3669–C3707, C3673–C3712, and C3685–C3697. A glycan (N-linked (GlcNAc...) asparagine) is linked at N3761. 6 disulfides stabilise this stretch: C3794–C3830, C3805–C3809, C3843–C3848, C3863–C3900, C3867–C3905, and C3878–C3890. Residues 3909-3964 form the TIL 9 domain; it reads CPAGMEMVSCANHCPYSCSDLQEGGMCQEDQACQLGCRCSEGFLEQDGGCVPVGHC. N3986 is a glycosylation site (N-linked (GlcNAc...) asparagine). 4 consecutive TSP type-1 domains span residues 4006–4059, 4100–4155, 4157–4213, and 4215–4269; these read HCAW…VPCP, PRGW…QLCL, KLER…GPCQ, and DCTW…GNCS. 12 disulfide bridges follow: C4007–C4043, C4018–C4022, C4053–C4058, C4112–C4149, C4116–C4154, C4127–C4139, C4169–C4207, C4173–C4212, C4184–C4195, C4216–C4253, C4227–C4229, and C4263–C4268. A glycan (N-linked (GlcNAc...) asparagine) is linked at N4196. An N-linked (GlcNAc...) asparagine glycan is attached at N4267. In terms of domain architecture, TIL 10 spans 4273-4328; sequence CPPPFEFQSCGSPCAGLCATHLNHRLCQDLPPCQPGCYCPKGLLEQAGSCILPEQC. N4408 and N4463 each carry an N-linked (GlcNAc...) asparagine glycan. The 52-residue stretch at 4465–4516 folds into the TSP type-1 24 domain; it reads TCQWGPWGPWSPCQMPCSGGFKLRWRVARDTSAGECPGPWAQTESCNMGSCP. 3 cysteine pairs are disulfide-bonded: C4466–C4500, C4477–C4481, and C4510–C4515. A TIL 11 domain is found at 4530–4576; sequence DCANQCPRSCADLWDGVQCLQGPCSPGCRCPPGQLVQDGHCVPISSC. 3 N-linked (GlcNAc...) asparagine glycosylation sites follow: N4584, N4601, and N4606. The 54-residue stretch at 4616–4669 folds into the TSP type-1 25 domain; that stretch reads CPVLGPWSAWSECSAVCGKGTMVRHRSCEEHPDREPCQALDLQQWQECNLQACP. 3 cysteine pairs are disulfide-bonded: C4628-C4663, C4632-C4668, and C4643-C4652. A TIL 12 domain is found at 4671 to 4725; it reads CPPGQVLSTCATMCPSLCSHLWPGTICVREPCQLGCGCPGGQLLYNGTCIPPEAC. 4 N-linked (GlcNAc...) asparagine glycosylation sites follow: N4716, N4756, N4799, and N4806. Residues 4777–4835 form the TIL 13 domain; that stretch reads CAPGEIWQHGKLGPCEKTCPEMNMTQAWSNCTEAQAPGCVCQLGYFRSQTGLCVPEDHC. A VWFC 3 domain is found at 4835–4893; it reads CECWHHGSPHLPGSEWQEACESCRCLHGKSVCIRHCPELSCAQGEVIMQEPGSCCPICQ. 4 disulfides stabilise this stretch: C4892–C4952, C4918–C4969, C4928–C4985, and C4932–C4987. Residues 4892–4991 form the CTCK domain; it reads CQQDTLKEEP…IHSCQCSACQ (100 aa). An N-linked (GlcNAc...) asparagine glycan is attached at N4912.

Belongs to the thrombospondin family. In terms of tissue distribution, subcommissural organ.

It localises to the secreted. Its subcellular location is the extracellular space. Its function is as follows. Involved in the modulation of neuronal aggregation. May be involved in developmental events during the formation of the central nervous system. This is SCO-spondin from Mus musculus (Mouse).